A 277-amino-acid chain; its full sequence is Diaminopimelate epimerase (277 aa).

Residues Asn11 and Asn62 each coordinate substrate. Cys71 functions as the Proton donor in the catalytic mechanism. Substrate contacts are provided by residues 72–73 (GN), Asn160, Asn193, and 211–212 (ER). Residue Cys220 is the Proton acceptor of the active site. A substrate-binding site is contributed by 221-222 (GT).

Belongs to the diaminopimelate epimerase family. In terms of assembly, homodimer.

The protein localises to the cytoplasm. It carries out the reaction (2S,6S)-2,6-diaminopimelate = meso-2,6-diaminopimelate. It participates in amino-acid biosynthesis; L-lysine biosynthesis via DAP pathway; DL-2,6-diaminopimelate from LL-2,6-diaminopimelate: step 1/1. Catalyzes the stereoinversion of LL-2,6-diaminopimelate (L,L-DAP) to meso-diaminopimelate (meso-DAP), a precursor of L-lysine. The protein is Diaminopimelate epimerase of Methanococcus maripaludis (strain C5 / ATCC BAA-1333).